The sequence spans 994 residues: Protein translocase subunit SecA (994 aa).

ATP-binding positions include Gln-85, 103 to 107 (GEGKT), and Asp-492. Low complexity predominate over residues 868 to 888 (IPDGAGPVADAQPVRPAAARQ). The interval 868–994 (IPDGAGPVAD…HGDPARRNTE (127 aa)) is disordered. Positions 889-900 (TPPPPSPVPSAP) are enriched in pro residues. Residues Cys-973, Cys-975, Cys-984, and His-985 each contribute to the Zn(2+) site. The segment covering 984–994 (CHGDPARRNTE) has biased composition (basic and acidic residues).

The protein belongs to the SecA family. In terms of assembly, monomer and homodimer. Part of the essential Sec protein translocation apparatus which comprises SecA, SecYEG and auxiliary proteins SecDF. Other proteins may also be involved. It depends on Zn(2+) as a cofactor.

The protein resides in the cell membrane. It is found in the cytoplasm. It carries out the reaction ATP + H2O + cellular proteinSide 1 = ADP + phosphate + cellular proteinSide 2.. Functionally, part of the Sec protein translocase complex. Interacts with the SecYEG preprotein conducting channel. Has a central role in coupling the hydrolysis of ATP to the transfer of proteins into and across the cell membrane, serving as an ATP-driven molecular motor driving the stepwise translocation of polypeptide chains across the membrane. The chain is Protein translocase subunit SecA from Frankia casuarinae (strain DSM 45818 / CECT 9043 / HFP020203 / CcI3).